The following is a 428-amino-acid chain: Ribosomal RNA small subunit methyltransferase B (428 aa).

S-adenosyl-L-methionine contacts are provided by residues 253–259 (CAAPGGK), D276, D302, and D321. The active-site Nucleophile is the C374.

Belongs to the class I-like SAM-binding methyltransferase superfamily. RsmB/NOP family.

It localises to the cytoplasm. It catalyses the reaction cytidine(967) in 16S rRNA + S-adenosyl-L-methionine = 5-methylcytidine(967) in 16S rRNA + S-adenosyl-L-homocysteine + H(+). Specifically methylates the cytosine at position 967 (m5C967) of 16S rRNA. This chain is Ribosomal RNA small subunit methyltransferase B, found in Enterobacter sp. (strain 638).